Here is a 350-residue protein sequence, read N- to C-terminus: Protein pelota homolog (350 aa).

This sequence belongs to the eukaryotic release factor 1 family. Pelota subfamily. Monomer. A divalent metal cation is required as a cofactor.

The protein localises to the cytoplasm. Functionally, may function in recognizing stalled ribosomes, interact with stem-loop structures in stalled mRNA molecules, and effect endonucleolytic cleavage of the mRNA. May play a role in the release non-functional ribosomes and degradation of damaged mRNAs. Has endoribonuclease activity. This is Protein pelota homolog from Methanosarcina acetivorans (strain ATCC 35395 / DSM 2834 / JCM 12185 / C2A).